Consider the following 268-residue polypeptide: MSELDTARTGAVRKAADLLYEATRSGVAVVPVRNLIGETDLEAAYAVQEVNTQRALVAGRRLVGRKIGLTSVAVQKQLGVEQPDYGMLFADMARTEGEEIALDDVLQPKVEAEIAFVLGRDLDGDQLTVADLFRAIEFAVPAIEIVGSRITNWDIRITDTIADNASSGLYVLGSTPKRLCDFDSRQAGMVMERQGIPVSSGVGAACLGAPLNAVLWLARVMARAGRPLRTGDTVLSGALGPMVPVAGGDVFDVRIAGLGSVTAAFAKA.

This sequence belongs to the hydratase/decarboxylase family.

It functions in the pathway xenobiotic degradation; toluene degradation. Converts the product of 2-hydroxy-6-oxo-2,4-heptadienoate hydrolase. The protein is TodF product hydratase (todJ) of Pseudomonas putida (strain ATCC 700007 / DSM 6899 / JCM 31910 / BCRC 17059 / LMG 24140 / F1).